An 860-amino-acid chain; its full sequence is Transcription factor E2F8 (860 aa).

Disordered regions lie at residues 1–27 (MENQ…PSSK) and 38–57 (DLGP…GEPW). S71 and S102 each carry phosphoserine. DNA-binding regions lie at residues 113 to 182 (RKEK…TWHG) and 261 to 347 (RKDK…KWTG). 3 disordered regions span residues 407–433 (RRKI…PPVP), 532–616 (LTPP…PKED), and 745–803 (QMSA…QPVP). A phosphoserine mark is found at S412 and S416. 2 stretches are compositionally biased toward polar residues: residues 412–429 (SAPS…SQNS) and 542–554 (VCPT…TGSK). Residues 555–565 (DPTDAPAEKTA) are compositionally biased toward basic and acidic residues.

Belongs to the E2F/DP family. As to quaternary structure, interacts with HIF1A. Homodimer and heterodimer: mainly forms homodimers and, to a lesser extent, heterodimers with E2F8. Dimerization is important for DNA-binding. In terms of tissue distribution, highly expressed in liver, skin, thymus and testis. Expressed in trophoblast giant cells throughout placenta development (at protein level).

Its subcellular location is the nucleus. Atypical E2F transcription factor that participates in various processes such as angiogenesis and polyploidization of specialized cells. Mainly acts as a transcription repressor that binds DNA independently of DP proteins and specifically recognizes the E2 recognition site 5'-TTTC[CG]CGC-3'. Directly represses transcription of classical E2F transcription factors such as E2F1: component of a feedback loop in S phase by repressing the expression of E2F1, thereby preventing p53/TP53-dependent apoptosis. Plays a key role in polyploidization of cells in placenta and liver by regulating the endocycle, probably by repressing genes promoting cytokinesis and antagonizing action of classical E2F proteins (E2F1, E2F2 and/or E2F3). Required for placental development by promoting polyploidization of trophoblast giant cells. Acts as a promoter of sprouting angiogenesis, possibly by acting as a transcription activator: associates with HIF1A, recognizes and binds the VEGFA promoter, which is different from canonical E2 recognition site, and activates expression of the VEGFA gene. In Mus musculus (Mouse), this protein is Transcription factor E2F8 (E2f8).